The chain runs to 141 residues: Lutropin subunit beta (141 aa).

The N-terminal stretch at 1 to 20 is a signal peptide; the sequence is MEMFQGLLLWLLLGVAGVWA. Cystine bridges form between C29/C77, C43/C92, C46/C130, C54/C108, C58/C110, and C113/C120. N33 is a glycosylation site (N-linked (GlcNAc...) asparagine).

Belongs to the glycoprotein hormones subunit beta family. As to quaternary structure, heterodimer of a common alpha chain and a unique beta chain which confers biological specificity to thyrotropin, lutropin, follitropin and gonadotropin.

The protein localises to the secreted. Functionally, promotes spermatogenesis and ovulation by stimulating the testes and ovaries to synthesize steroids. This Bos taurus (Bovine) protein is Lutropin subunit beta (LHB).